Here is a 110-residue protein sequence, read N- to C-terminus: UPF0122 protein SPG_1182 (110 aa).

Belongs to the UPF0122 family.

Functionally, might take part in the signal recognition particle (SRP) pathway. This is inferred from the conservation of its genetic proximity to ftsY/ffh. May be a regulatory protein. The protein is UPF0122 protein SPG_1182 of Streptococcus pneumoniae serotype 19F (strain G54).